We begin with the raw amino-acid sequence, 124 residues long: Salivary protein 15 Iric-3 (124 aa).

Residues methionine 1–alanine 22 form the signal peptide. N-linked (GlcNAc...) asparagine glycans are attached at residues asparagine 82 and asparagine 93. The segment at glycine 105 to cysteine 124 is CD4-binding.

This sequence belongs to the salp15 family. In terms of assembly, interacts with host CD4. Interacts with host DC-SIGN (CD209). Interacts with Borrelia outer surface protein C (OspC). As to expression, expressed in salivary glands. Detected in fed adult female.

It localises to the secreted. Its function is as follows. Salivary tick protein that downregulates host immune system by binding to both dendritic cells, and CD4(+) T cells. Specifically binds to the CD4 coreceptor on T cells. This interaction prevents the activation of the Src kinase, Lck, and its downstream substrate Zap-70, and results in deficient activation of PLCgamma1, the repression of calcium fluxes triggered by T-cell antigen receptor (TCR) ligation, and a subsequent reduction in interleukin-2 production. This salivary protein also binds to DC-SIGN (CD209) on dendritic cells (DC) and activates the Raf-1 kinase/MEK signaling pathway that results in down-regulating expression of pro-inflammatory cytokines. Furthermore, it inhibits T cell proliferation induced by DCs. In addition, it inhibits in vitro keratinocyte inflammation induced by Borrelia burgdorferi or by the major outer surface protein (OspC) of Borrelia. In addition, it downregulates chemokines and monocyte chemoattractant protein 1, as well as several antimicrobial peptides such as defensins, cathelicidin, psoriasin, and RNase 7. Apart from its immunomodulatory activities, it is also associated with protection of Borrelia spirochetes from antibody-mediated killing through its binding to OspC. In vivo, tests on different immune disease animal models show promising therapeutic results, e.g., in inhibiting HIV infection, experimental autoimmune encephalomyelitis, transplantation rejection, and asthma. This is Salivary protein 15 Iric-3 from Ixodes ricinus (Common tick).